A 219-amino-acid chain; its full sequence is Proteasome subunit beta type-9 (219 aa).

Residues 1-20 (MLRAGAPTGDLPRAGEVHTG) constitute a propeptide, removed in mature form. T21 serves as the catalytic Nucleophile. N6-acetyllysine occurs at positions 53 and 109.

It belongs to the peptidase T1B family. In terms of assembly, the 26S proteasome consists of a 20S proteasome core and two 19S regulatory subunits. The 20S proteasome core is composed of 28 subunits that are arranged in four stacked rings, resulting in a barrel-shaped structure. The two end rings are each formed by seven alpha subunits, and the two central rings are each formed by seven beta subunits. The catalytic chamber with the active sites is on the inside of the barrel. Component of the immunoproteasome, where it displaces the equivalent housekeeping subunit PSMB6. Component of the spermatoproteasome, a form of the proteasome specifically found in testis. As to quaternary structure, (Microbial infection) Interacts with HIV-1 TAT protein. Autocleaved. The resulting N-terminal Thr residue of the mature subunit is responsible for the nucleophile proteolytic activity.

Its subcellular location is the cytoplasm. The protein localises to the nucleus. It catalyses the reaction Cleavage of peptide bonds with very broad specificity.. Its function is as follows. The proteasome is a multicatalytic proteinase complex which is characterized by its ability to cleave peptides with Arg, Phe, Tyr, Leu, and Glu adjacent to the leaving group at neutral or slightly basic pH. The proteasome has an ATP-dependent proteolytic activity. This subunit is involved in antigen processing to generate class I binding peptides. Replacement of PSMB6 by PSMB9 increases the capacity of the immunoproteasome to cleave model peptides after hydrophobic and basic residues. The sequence is that of Proteasome subunit beta type-9 (PSMB9) from Homo sapiens (Human).